Consider the following 381-residue polypeptide: Putative 8-amino-7-oxononanoate synthase (381 aa).

Arg20 lines the substrate pocket. 107–108 (GY) serves as a coordination point for pyridoxal 5'-phosphate. Substrate is bound at residue His132. Pyridoxal 5'-phosphate-binding positions include Ser180, 205–208 (DEAH), and 236–239 (TLSK). An N6-(pyridoxal phosphate)lysine modification is found at Lys239. Thr351 lines the substrate pocket.

It belongs to the class-II pyridoxal-phosphate-dependent aminotransferase family. BioF subfamily. In terms of assembly, homodimer. Pyridoxal 5'-phosphate serves as cofactor.

The enzyme catalyses 6-carboxyhexanoyl-[ACP] + L-alanine + H(+) = (8S)-8-amino-7-oxononanoate + holo-[ACP] + CO2. Its pathway is cofactor biosynthesis; biotin biosynthesis. Its function is as follows. Catalyzes the decarboxylative condensation of pimeloyl-[acyl-carrier protein] and L-alanine to produce 8-amino-7-oxononanoate (AON), [acyl-carrier protein], and carbon dioxide. This is Putative 8-amino-7-oxononanoate synthase (bioF) from Rippkaea orientalis (strain PCC 8801 / RF-1) (Cyanothece sp. (strain PCC 8801)).